A 459-amino-acid chain; its full sequence is MQIQFHLYNTLTRTKELFRPQDQANVKMYVCGPTVYDNPHIGNSRSAAVYDLLYRILIKIFGSTAVKYIRNITDVDDKIIDRAELLGSTINELTDKVTQEFHINMEYLGCKLPSIEPKATEHIDIMIEIIERLIAKKHAYIADKHVYFNVLSAPNYTELSNRNLEEMFEGVRVENSKTKKHPQDFVLWKPAKPNESANMNFDSPWGLGRPGWHIECSAMSYKYLGENFDIHGGGADLIFPHHTNEIAQSRCAFPSSTYAKYWVHHGFLTVNGEKMSKSLGNFITVRDLMDKEISGEVIRLFLLSSHYRRPLDYNDKAIEDAKKTLDYWYRAIVNINLQKIDIIPNDFMQSLLDDMNTPLAVKIINDYARGVFTSTTEEEKKFNASNLITCANFIGLMNKTPHEWFNSGVNELYINELVNKRLEAKKQKNWLLADQIRNQLLEQQIVLEDKPDGTIWRKG.

Cys-31 contributes to the Zn(2+) binding site. The 'HIGH' region signature appears at 33–43 (PTVYDNPHIGN). Residues Cys-216, His-241, and Glu-245 each coordinate Zn(2+). The 'KMSKS' region motif lies at 274–278 (KMSKS). Residue Lys-277 coordinates ATP.

This sequence belongs to the class-I aminoacyl-tRNA synthetase family. Monomer. It depends on Zn(2+) as a cofactor.

The protein resides in the cytoplasm. The enzyme catalyses tRNA(Cys) + L-cysteine + ATP = L-cysteinyl-tRNA(Cys) + AMP + diphosphate. The polypeptide is Cysteine--tRNA ligase (Rickettsia canadensis (strain McKiel)).